The sequence spans 208 residues: Putative ADP-ribose pyrophosphatase YjhB (208 aa).

The Nudix hydrolase domain maps to T69–F195. Residues G100–G121 carry the Nudix box motif. The Mg(2+) site is built by E115 and E119.

Belongs to the Nudix hydrolase family. Mg(2+) is required as a cofactor. The cofactor is Mn(2+).

Functionally, probably mediates the hydrolysis of some nucleoside diphosphate derivatives. In Bacillus subtilis (strain 168), this protein is Putative ADP-ribose pyrophosphatase YjhB (yjhB).